The sequence spans 994 residues: Phosphoenolpyruvate carboxylase (994 aa).

The disordered stretch occupies residues 1–67 (MKAVRSDKTT…GRTREDKDHP (67 aa)). 2 stretches are compositionally biased toward low complexity: residues 9 to 24 (TTQA…PAKA) and 34 to 57 (AAPQ…PKAN). Active-site residues include histidine 204 and lysine 646.

It belongs to the PEPCase type 1 family. It depends on Mg(2+) as a cofactor.

The enzyme catalyses oxaloacetate + phosphate = phosphoenolpyruvate + hydrogencarbonate. Its function is as follows. Forms oxaloacetate, a four-carbon dicarboxylic acid source for the tricarboxylic acid cycle. The polypeptide is Phosphoenolpyruvate carboxylase (Paraburkholderia xenovorans (strain LB400)).